The primary structure comprises 515 residues: MEFFLDPSIWAGLLTLVVLEVVLGIDNLIFVAILSEKLPPNQRDKARLIGLGLALIMRLALLSLISWVVTLTSPIISNNFFSLSIRDLILLIGGLFLLFKATIELHERLENEDHENTENKNYASFWAVVIQIVVLDAVFSLDAIITAVGMVNQLLIMMIAVVLATILMLLASKALTNFINIHQTVVVLCLSFLLMIGFSLVAEALKFYIPKGYLYAAIGFSILIEIFNQIARHNFMKNQSRKPMRQRAAEAILRLMIREKNNNKNRIKTDNKAEIVLSSSLETETFKDEEKYMINGVLTLAGRSIKSIMTPRSNISWVNTEKTINEIRLQLLDTPHNLFPVCKGELDEIIGIVRAKELLVAIEKNIDVYTFASQIPPIIIPDTLDPINLLGVLRRAQGSFVIVSNEFGVVQGLITPLDVLEAIAGEFPDADETPDIIKEQNSWLVKGETDLHSLQQLLNTKELIKQDDCASLGGLLISQKGQLPLPGETIKINSFSFHIVNATEYRIDLVRITKN.

The next 7 membrane-spanning stretches (helical) occupy residues 14-34 (LTLV…VAIL), 49-69 (IGLG…SWVV), 79-99 (NFFS…FLLF), 125-145 (FWAV…DAII), 150-170 (MVNQ…LMLL), 185-205 (VVVL…AEAL), and 207-227 (FYIP…IEIF). 2 CBS domains span residues 309-368 (MTPR…NIDV) and 372-432 (ASQI…DADE).

It belongs to the UPF0053 family.

The protein localises to the cell membrane. In Buchnera aphidicola subsp. Schizaphis graminum (strain Sg), this protein is UPF0053 protein BUsg_314.